Consider the following 157-residue polypeptide: Small ribosomal subunit protein uS7 (157 aa).

The protein belongs to the universal ribosomal protein uS7 family. Part of the 30S ribosomal subunit. Contacts proteins S9 and S11.

Functionally, one of the primary rRNA binding proteins, it binds directly to 16S rRNA where it nucleates assembly of the head domain of the 30S subunit. Is located at the subunit interface close to the decoding center, probably blocks exit of the E-site tRNA. This Psychrobacter sp. (strain PRwf-1) protein is Small ribosomal subunit protein uS7.